The primary structure comprises 619 residues: Dihydroxy-acid dehydratase (619 aa).

Position 81 (Asp-81) interacts with Mg(2+). Cys-122 contributes to the [2Fe-2S] cluster binding site. Residues Asp-123 and Lys-124 each coordinate Mg(2+). Lys-124 carries the N6-carboxylysine modification. Cys-195 lines the [2Fe-2S] cluster pocket. A Mg(2+)-binding site is contributed by Glu-494. The active-site Proton acceptor is Ser-520.

It belongs to the IlvD/Edd family. As to quaternary structure, homodimer. Requires [2Fe-2S] cluster as cofactor. Mg(2+) is required as a cofactor.

It carries out the reaction (2R)-2,3-dihydroxy-3-methylbutanoate = 3-methyl-2-oxobutanoate + H2O. It catalyses the reaction (2R,3R)-2,3-dihydroxy-3-methylpentanoate = (S)-3-methyl-2-oxopentanoate + H2O. It participates in amino-acid biosynthesis; L-isoleucine biosynthesis; L-isoleucine from 2-oxobutanoate: step 3/4. Its pathway is amino-acid biosynthesis; L-valine biosynthesis; L-valine from pyruvate: step 3/4. Functions in the biosynthesis of branched-chain amino acids. Catalyzes the dehydration of (2R,3R)-2,3-dihydroxy-3-methylpentanoate (2,3-dihydroxy-3-methylvalerate) into 2-oxo-3-methylpentanoate (2-oxo-3-methylvalerate) and of (2R)-2,3-dihydroxy-3-methylbutanoate (2,3-dihydroxyisovalerate) into 2-oxo-3-methylbutanoate (2-oxoisovalerate), the penultimate precursor to L-isoleucine and L-valine, respectively. This is Dihydroxy-acid dehydratase from Shewanella sp. (strain MR-4).